Here is a 200-residue protein sequence, read N- to C-terminus: Pyridoxal 5'-phosphate synthase subunit PdxT (200 aa).

52–54 serves as a coordination point for L-glutamine; that stretch reads GES. Residue Cys-84 is the Nucleophile of the active site. Residues Arg-116 and 145–146 each bind L-glutamine; that span reads IR. Catalysis depends on charge relay system residues His-181 and Glu-183.

Belongs to the glutaminase PdxT/SNO family. In the presence of PdxS, forms a dodecamer of heterodimers. Only shows activity in the heterodimer.

The enzyme catalyses aldehydo-D-ribose 5-phosphate + D-glyceraldehyde 3-phosphate + L-glutamine = pyridoxal 5'-phosphate + L-glutamate + phosphate + 3 H2O + H(+). It catalyses the reaction L-glutamine + H2O = L-glutamate + NH4(+). The protein operates within cofactor biosynthesis; pyridoxal 5'-phosphate biosynthesis. Functionally, catalyzes the hydrolysis of glutamine to glutamate and ammonia as part of the biosynthesis of pyridoxal 5'-phosphate. The resulting ammonia molecule is channeled to the active site of PdxS. The sequence is that of Pyridoxal 5'-phosphate synthase subunit PdxT from Saccharolobus solfataricus (strain ATCC 35092 / DSM 1617 / JCM 11322 / P2) (Sulfolobus solfataricus).